The sequence spans 187 residues: Elongation factor P (187 aa).

The protein belongs to the elongation factor P family.

It is found in the cytoplasm. Its pathway is protein biosynthesis; polypeptide chain elongation. Functionally, involved in peptide bond synthesis. Stimulates efficient translation and peptide-bond synthesis on native or reconstituted 70S ribosomes in vitro. Probably functions indirectly by altering the affinity of the ribosome for aminoacyl-tRNA, thus increasing their reactivity as acceptors for peptidyl transferase. The sequence is that of Elongation factor P from Rhizorhabdus wittichii (strain DSM 6014 / CCUG 31198 / JCM 15750 / NBRC 105917 / EY 4224 / RW1) (Sphingomonas wittichii).